The chain runs to 88 residues: Probable Fe(2+)-trafficking protein (88 aa).

Belongs to the Fe(2+)-trafficking protein family.

Could be a mediator in iron transactions between iron acquisition and iron-requiring processes, such as synthesis and/or repair of Fe-S clusters in biosynthetic enzymes. In Neisseria gonorrhoeae (strain ATCC 700825 / FA 1090), this protein is Probable Fe(2+)-trafficking protein.